The primary structure comprises 544 residues: CTP synthase (544 aa).

The segment at 1–266 is amidoligase domain; that stretch reads MKYIFVTGGV…GKAVEELLGL (266 aa). S12 is a binding site for CTP. Position 12 (S12) interacts with UTP. 13–18 is an ATP binding site; sequence SLGKGV. L-glutamine is bound at residue Y53. Residue D70 participates in ATP binding. Positions 70 and 140 each coordinate Mg(2+). Residues 147-149, 187-192, and K223 contribute to the CTP site; these read DIE and KTKPTQ. UTP is bound by residues 187–192 and K223; that span reads KTKPTQ. Residues 291–544 form the Glutamine amidotransferase type-1 domain; sequence TIAIAGKYTA…VKAALEHQQQ (254 aa). Residue G356 coordinates L-glutamine. The active-site Nucleophile; for glutamine hydrolysis is C383. Residues 384-387, E407, and R467 contribute to the L-glutamine site; that span reads LGMQ. Active-site residues include H517 and E519.

It belongs to the CTP synthase family. As to quaternary structure, homotetramer.

It catalyses the reaction UTP + L-glutamine + ATP + H2O = CTP + L-glutamate + ADP + phosphate + 2 H(+). The enzyme catalyses L-glutamine + H2O = L-glutamate + NH4(+). The catalysed reaction is UTP + NH4(+) + ATP = CTP + ADP + phosphate + 2 H(+). It participates in pyrimidine metabolism; CTP biosynthesis via de novo pathway; CTP from UDP: step 2/2. Allosterically activated by GTP, when glutamine is the substrate; GTP has no effect on the reaction when ammonia is the substrate. The allosteric effector GTP functions by stabilizing the protein conformation that binds the tetrahedral intermediate(s) formed during glutamine hydrolysis. Inhibited by the product CTP, via allosteric rather than competitive inhibition. Functionally, catalyzes the ATP-dependent amination of UTP to CTP with either L-glutamine or ammonia as the source of nitrogen. Regulates intracellular CTP levels through interactions with the four ribonucleotide triphosphates. This Deinococcus radiodurans (strain ATCC 13939 / DSM 20539 / JCM 16871 / CCUG 27074 / LMG 4051 / NBRC 15346 / NCIMB 9279 / VKM B-1422 / R1) protein is CTP synthase.